The primary structure comprises 325 residues: D site-binding protein (325 aa).

Disordered regions lie at residues 1–99, 127–200, and 229–255; these read MARP…APGL, GLPP…DTVE, and RFSEEELKPQPIMKKARKIQVPEEQKD. Gly residues predominate over residues 17–28; that stretch reads GPAGTPPGGGAL. 2 stretches are compositionally biased toward low complexity: residues 29–38 and 57–80; these read LGLRSLLQGT and ALPAATTPGPGLETAGPADAPAGA. The residue at position 86 (serine 86) is a Phosphoserine. Positions 129 to 153 are enriched in pro residues; the sequence is PPSPPPPGGPSPEPSPARTPAPSPG. The segment covering 157 to 167 has biased composition (low complexity); the sequence is CGSASPRSSPG. Residues 255 to 318 enclose the bZIP domain; it reads DEKYWSRRYK…SHYRAVLSRY (64 aa). The segment at 257–279 is basic motif; that stretch reads KYWSRRYKNNEAAKRSRDARRLK. Residues 283 to 297 form a leucine-zipper region; the sequence is ISVRAAFLEKENALL.

The protein belongs to the bZIP family. PAR subfamily. In terms of assembly, binds DNA as a homodimer or a heterodimer. Can form a heterodimer with TEF. In terms of tissue distribution, ubiquitously expressed. Expressed in the suprachiasmatic nuclei (SCN) and in most peripheral tissues, with a strong circadian rhythmicity.

The protein localises to the nucleus. This transcriptional activator recognizes and binds to the sequence 5'-RTTAYGTAAY-3' found in the promoter of genes such as albumin, CYP2A4 and CYP2A5. It is not essential for circadian rhythm generation, but modulates important clock output genes. May be a direct target for regulation by the circadian pacemaker component clock. May affect circadian period and sleep regulation. This is D site-binding protein (DBP) from Homo sapiens (Human).